A 119-amino-acid chain; its full sequence is Protein TusC (119 aa).

It belongs to the DsrF/TusC family. In terms of assembly, heterohexamer, formed by a dimer of trimers. The hexameric TusBCD complex contains 2 copies each of TusB, TusC and TusD. The TusBCD complex interacts with TusE.

It localises to the cytoplasm. Functionally, part of a sulfur-relay system required for 2-thiolation of 5-methylaminomethyl-2-thiouridine (mnm(5)s(2)U) at tRNA wobble positions. This is Protein TusC from Shigella dysenteriae serotype 1 (strain Sd197).